Consider the following 160-residue polypeptide: Photosystem II extrinsic protein V (160 aa).

The N-terminal stretch at 1-25 (MKRFILLAIATVFFFCQFQTNPVNA) is a signal peptide. Heme c contacts are provided by Cys62, Cys65, His66, and His117.

Belongs to the cytochrome c family. PsbV subfamily. In terms of assembly, PSII is composed of 1 copy each of membrane proteins PsbA, PsbB, PsbC, PsbD, PsbE, PsbF, PsbH, PsbI, PsbJ, PsbK, PsbL, PsbM, PsbT, PsbX, PsbY, PsbZ, Psb30/Ycf12, peripheral proteins PsbO, CyanoQ (PsbQ), PsbU, PsbV and a large number of cofactors. It forms dimeric complexes. It depends on heme c as a cofactor.

It is found in the cellular thylakoid membrane. Its function is as follows. One of the extrinsic, lumenal subunits of photosystem II (PSII). PSII is a light-driven water plastoquinone oxidoreductase, using light energy to abstract electrons from H(2)O, generating a proton gradient subsequently used for ATP formation. The extrinsic proteins stabilize the structure of photosystem II oxygen-evolving complex (OEC), the ion environment of oxygen evolution and protect the OEC against heat-induced inactivation. Low-potential cytochrome c that plays a role in the OEC of PSII. The chain is Photosystem II extrinsic protein V from Rippkaea orientalis (strain PCC 8801 / RF-1) (Cyanothece sp. (strain PCC 8801)).